Here is a 35-residue protein sequence, read N- to C-terminus: Natriuretic peptide TNPb (35 aa).

An intrachain disulfide couples C9 to C25.

In terms of tissue distribution, expressed by the venom gland.

It is found in the secreted. Snake venom natriuretic peptide that exhibits vasoactive and probable hypotensive activity. Is only weakly active on natriuretic peptide receptor-C (NPR3). Stimulates cGMP production through the natriuretic peptide receptor 1 (NPR1) with moderate potencies for the rat NPR1 (EC(50)=1200 nM), and very weak potencies over human NPR1 (30% activation at 10 uM). In vivo, does not impact systolic and diastolic blood pressure, as well as heart rate, when intravenously injected in conscious rabbits. Does not affect the bradycardia due to cardiac afferent stimulation (Bezold-Jarisch reflex). In Oxyuranus microlepidotus (Inland taipan), this protein is Natriuretic peptide TNPb.